A 422-amino-acid polypeptide reads, in one-letter code: MYTHVDVVGIAEASAALYVQKDRDRYSDVLTTIENFIYQHKCIITGESAHLLFLKKNIYLYEFYSNNVAEHSKALATLLYKLDPEYLTRYTVLITKIPNHWYVINVDQREFVRLYAIPAVKQHLPIPILPFYCTSALTQQELFCLGPELQLIQIYSKLCNPNFVEEWPTLLDYEKSMRTLFLEQFPQRLEMTGGKKEEEEKHESIIKKIILEMVSTRQRIVVGGYIQKNLYNHVLKNRNRLQLITSLNIYEEKDIIQQFCDSNGLKIKIRINNPLLPTNPELRRLTIYFNNTNDDDQSYLIVDMYNTGSYELVPTNQINTLDGSFLIGTPFVQARFLLVEIWVLMLIAQQTKKDTKKIIQFFINQYEMLMNSPWPSMEALFPSSSKRYLGNYVDPNALIKWAQLKLKRIPPFYPGKPDEESC.

Belongs to the asfivirus K421R family.

Its subcellular location is the virion. This is an uncharacterized protein from Ornithodoros (relapsing fever ticks).